Here is a 611-residue protein sequence, read N- to C-terminus: MSQAGVERLLKGLQILVLVLRLSAGYFPEERWNPESPFRSPTVLIAVLARNSEGSLPEVLGALDRLHYPKERISLWVATDHNFDNTSQILREWLINVQNQYHHVEWRPQEHPRWFRDEESPKHWSHSRYEYVMKLRQAALTSAREMWADYIFFLDADNLLTNSETLNLLIAENKTVVAPMLESRAAYSNFWCGMTTQGYYRRTPAYMPIRRRERQGCFPVPMVHSTFLIDLRKEASQQLDFYPPHADYTWAFDDIIVFAFSCRQAEVQMFLCNKEIYGYLPVPLRSHSTLLDETDNFLHTKLEAMVKGPQVHPSSFVTIPKKVPDKMSFDEVFLINLKHRQDRRERMKRTLYELQIDFKLVDAVYGKMLNQSNVTEMGIKMLPGYKDPYHGRPLTRGEMGCFLSHYNIWKEISERNLEVSAVLEDDLRFEIFFKRRLQTLLHDLEIAKLDWDLIYLGRKRMQVDEPEEPVPGVRNLVVSDYSYWTLGYLISLRGARKLLNAEPLGKMLPVDEFLPVMYDKHPISDYSSHFSTRDLRAFSVEPLLLYPTHYTGDKGYISDTETSVLWDNVTQPTDWDRAKSRKTHQQEKLRSEALNTPSMGSPFDNTARDEL.

The first 24 residues, 1 to 24 (MSQAGVERLLKGLQILVLVLRLSA), serve as a signal peptide directing secretion. N85, N173, N370, N373, and N568 each carry an N-linked (GlcNAc...) asparagine glycan. Residues 576-591 (DRAKSRKTHQQEKLRS) show a composition bias toward basic and acidic residues. The segment at 576–611 (DRAKSRKTHQQEKLRSEALNTPSMGSPFDNTARDEL) is disordered. Residues 608–611 (RDEL) carry the Prevents secretion from ER motif.

It belongs to the glycosyltransferase 25 family.

It is found in the endoplasmic reticulum lumen. The enzyme catalyses (5R)-5-hydroxy-L-lysyl-[collagen] + UDP-alpha-D-galactose = (5R)-5-O-(beta-D-galactosyl)-5-hydroxy-L-lysyl-[collagen] + UDP + H(+). Its function is as follows. Beta-galactosyltransferase that transfers beta-galactose to hydroxylysine residues of type I collagen. By acting on collagen glycosylation, facilitates the formation of collagen triple helix. The polypeptide is Procollagen galactosyltransferase 1-B (colgalt1-b) (Xenopus laevis (African clawed frog)).